We begin with the raw amino-acid sequence, 270 residues long: S-adenosylmethionine decarboxylase proenzyme (270 aa).

The active-site Schiff-base intermediate with substrate; via pyruvic acid is the S120. The residue at position 120 (S120) is a Pyruvic acid (Ser); by autocatalysis. The active-site Proton acceptor; for processing activity is H125. The active-site Proton donor; for catalytic activity is the C148.

It belongs to the prokaryotic AdoMetDC family. Type 2 subfamily. Heterooctamer of four alpha and four beta chains arranged as a tetramer of alpha/beta heterodimers. Pyruvate is required as a cofactor. Is synthesized initially as an inactive proenzyme. Formation of the active enzyme involves a self-maturation process in which the active site pyruvoyl group is generated from an internal serine residue via an autocatalytic post-translational modification. Two non-identical subunits are generated from the proenzyme in this reaction, and the pyruvate is formed at the N-terminus of the alpha chain, which is derived from the carboxyl end of the proenzyme. The post-translation cleavage follows an unusual pathway, termed non-hydrolytic serinolysis, in which the side chain hydroxyl group of the serine supplies its oxygen atom to form the C-terminus of the beta chain, while the remainder of the serine residue undergoes an oxidative deamination to produce ammonia and the pyruvoyl group blocking the N-terminus of the alpha chain.

The catalysed reaction is S-adenosyl-L-methionine + H(+) = S-adenosyl 3-(methylsulfanyl)propylamine + CO2. It functions in the pathway amine and polyamine biosynthesis; S-adenosylmethioninamine biosynthesis; S-adenosylmethioninamine from S-adenosyl-L-methionine: step 1/1. Its function is as follows. Catalyzes the decarboxylation of S-adenosylmethionine to S-adenosylmethioninamine (dcAdoMet), the propylamine donor required for the synthesis of the polyamines spermine and spermidine from the diamine putrescine. The sequence is that of S-adenosylmethionine decarboxylase proenzyme from Alkaliphilus oremlandii (strain OhILAs) (Clostridium oremlandii (strain OhILAs)).